A 261-amino-acid polypeptide reads, in one-letter code: Syntaxin-7 (261 aa).

N-acetylserine is present on serine 2. The Cytoplasmic segment spans residues 2 to 238 (SYTPGIGGDP…NYQRKSRKTL (237 aa)). Threonine 4 carries the phosphothreonine modification. The stretch at 47–68 (ELRQQLQQEQQYTNQLAKETDK) forms a coiled coil. A Phosphothreonine modification is found at threonine 79. Serine 125, serine 126, serine 129, and serine 205 each carry phosphoserine. The segment at 128-148 (VSGGFPEDSSKEKNFVSWESQ) is disordered. The t-SNARE coiled-coil homology domain occupies 165-227 (LRLIHERESS…QQANQQLSRA (63 aa)). A helical; Anchor for type IV membrane protein membrane pass occupies residues 239-259 (CIIILILVVGIVIIFFIVWGL). The Vesicular portion of the chain corresponds to 260–261 (KG).

The protein belongs to the syntaxin family. In terms of assembly, interacts with VPS11, VPS16 and VPS18. Interacts with VPS33A. Forms a SNARE complex with VTI1B, STX8 and VAMP8 which functions in the homotypic fusion of late endosomes. Component of the SNARE complex composed of STX7, STX8, VAMP7 and VTI1B that is required for heterotypic fusion of late endosomes with lysosomes. Interacts with TPC1. As to expression, detected in all tissues tested. Highest expression is found in kidney followed by lung, spleen, heart and brain. Lower expression, in skeletal muscle, liver and testis.

The protein localises to the early endosome membrane. In terms of biological role, may be involved in protein trafficking from the plasma membrane to the early endosome (EE) as well as in homotypic fusion of endocytic organelles. Mediates the endocytic trafficking from early endosomes to late endosomes and lysosomes. In Rattus norvegicus (Rat), this protein is Syntaxin-7 (Stx7).